The sequence spans 614 residues: 2-succinyl-5-enolpyruvyl-6-hydroxy-3-cyclohexene-1-carboxylate synthase (614 aa).

Belongs to the TPP enzyme family. MenD subfamily. In terms of assembly, homodimer. The cofactor is Mg(2+). Mn(2+) is required as a cofactor. Thiamine diphosphate serves as cofactor.

The catalysed reaction is isochorismate + 2-oxoglutarate + H(+) = 5-enolpyruvoyl-6-hydroxy-2-succinyl-cyclohex-3-ene-1-carboxylate + CO2. It participates in quinol/quinone metabolism; 1,4-dihydroxy-2-naphthoate biosynthesis; 1,4-dihydroxy-2-naphthoate from chorismate: step 2/7. Its pathway is quinol/quinone metabolism; menaquinone biosynthesis. In terms of biological role, catalyzes the thiamine diphosphate-dependent decarboxylation of 2-oxoglutarate and the subsequent addition of the resulting succinic semialdehyde-thiamine pyrophosphate anion to isochorismate to yield 2-succinyl-5-enolpyruvyl-6-hydroxy-3-cyclohexene-1-carboxylate (SEPHCHC). In Sorangium cellulosum (strain So ce56) (Polyangium cellulosum (strain So ce56)), this protein is 2-succinyl-5-enolpyruvyl-6-hydroxy-3-cyclohexene-1-carboxylate synthase.